A 243-amino-acid polypeptide reads, in one-letter code: Pyridoxine 5'-phosphate synthase (243 aa).

Asn-9 contributes to the 3-amino-2-oxopropyl phosphate binding site. Asp-11 to His-12 serves as a coordination point for 1-deoxy-D-xylulose 5-phosphate. Arg-20 is a 3-amino-2-oxopropyl phosphate binding site. Residue His-45 is the Proton acceptor of the active site. Arg-47 and His-52 together coordinate 1-deoxy-D-xylulose 5-phosphate. The Proton acceptor role is filled by Glu-72. Thr-102 serves as a coordination point for 1-deoxy-D-xylulose 5-phosphate. His-193 (proton donor) is an active-site residue. 3-amino-2-oxopropyl phosphate-binding positions include Gly-194 and Gly-215–His-216.

It belongs to the PNP synthase family. As to quaternary structure, homooctamer; tetramer of dimers.

The protein resides in the cytoplasm. It catalyses the reaction 3-amino-2-oxopropyl phosphate + 1-deoxy-D-xylulose 5-phosphate = pyridoxine 5'-phosphate + phosphate + 2 H2O + H(+). It functions in the pathway cofactor biosynthesis; pyridoxine 5'-phosphate biosynthesis; pyridoxine 5'-phosphate from D-erythrose 4-phosphate: step 5/5. In terms of biological role, catalyzes the complicated ring closure reaction between the two acyclic compounds 1-deoxy-D-xylulose-5-phosphate (DXP) and 3-amino-2-oxopropyl phosphate (1-amino-acetone-3-phosphate or AAP) to form pyridoxine 5'-phosphate (PNP) and inorganic phosphate. The polypeptide is Pyridoxine 5'-phosphate synthase (Pseudoalteromonas translucida (strain TAC 125)).